Here is a 123-residue protein sequence, read N- to C-terminus: Thioredoxin domain-containing protein 17 (123 aa).

Positions 41–123 constitute a Thioredoxin domain; the sequence is SWCPDCVKAE…DLVRMMFTED (83 aa). Residues C43 and C46 each act as nucleophile in the active site. The cysteines at positions 43 and 46 are disulfide-linked.

This sequence belongs to the thioredoxin family.

Its subcellular location is the cytoplasm. Functionally, disulfide reductase. May participate in various redox reactions through the reversible oxidation of its active center dithiol to a disulfide and catalyze dithiol-disulfide exchange reactions. Has peroxidase activity and may contribute to the elimination of cellular hydrogen peroxide. This chain is Thioredoxin domain-containing protein 17 (txndc17), found in Danio rerio (Zebrafish).